The chain runs to 724 residues: uncharacterized protein (724 aa).

Disordered stretches follow at residues 1 to 23 (MEDR…IPDN), 166 to 477 (PDGY…PPRD), 496 to 517 (EAHD…AHGP), and 532 to 691 (DHPI…PALS). 2 stretches are compositionally biased toward polar residues: residues 227–245 (VSQS…TVNQ) and 270–296 (STTL…TSDA). Over residues 304-322 (TRDHDRYGNGRGPDTDRLE) the composition is skewed to basic and acidic residues. The span at 403-413 (PSSSHSETPNM) shows a compositional bias: polar residues. Basic and acidic residues-rich tracts occupy residues 550 to 560 (RNHEFTEDKRL) and 637 to 657 (LRHD…DLAA). The span at 682 to 691 (RLAAASPALS) shows a compositional bias: low complexity.

This is an uncharacterized protein from Neurospora crassa (strain ATCC 24698 / 74-OR23-1A / CBS 708.71 / DSM 1257 / FGSC 987).